Reading from the N-terminus, the 1290-residue chain is Sorbin and SH3 domain-containing protein 1 (1290 aa).

Disordered regions lie at residues 1-211 (MSSE…LSDV), 238-271 (HKLN…SKSE), and 286-313 (TLPL…KKVD). Residues 45 to 61 (SSSYRGTPSSSPVSPQE) show a composition bias toward low complexity. Residue Thr-51 is modified to Phosphothreonine. A phosphoserine mark is found at Ser-55, Ser-58, and Ser-62. The span at 62 to 71 (SPKHESKSGL) shows a compositional bias: basic and acidic residues. 2 stretches are compositionally biased toward polar residues: residues 83-95 (LSSS…NAQP) and 123-153 (EVSS…TIVN). Residues 161 to 173 (HNRDPASERRAGE) are compositionally biased toward basic and acidic residues. Residues Asp-164 and Asp-175 each carry the phosphoserine modification. Thr-179 is subject to Phosphothreonine. Phosphoserine is present on residues Ser-185, Ala-194, Ser-204, Ser-209, Ser-254, Ser-261, Ser-270, and Pro-288. The span at 189–199 (ASERRAKDASR) shows a compositional bias: basic and acidic residues. A SoHo domain is found at 202–247 (VRSAQDLSDVSTDEVGIPLRNTERSKDWYKTMFKQIHKLNRDDDSD). Basic and acidic residues predominate over residues 240–260 (LNRDDDSDVHSPRYSFSDDTK). Residues 299–313 (SPERNDWEPLDKKVD) show a composition bias toward basic and acidic residues. Tyr-325 bears the Phosphotyrosine; by ABL1 mark. Phosphoserine occurs at positions 345, 346, 357, 376, and 407. The tract at residues 389–416 (VETVNKSPSANSPQSSAVSPTPDITSEP) is disordered. The span at 392-412 (VNKSPSANSPQSSAVSPTPDI) shows a compositional bias: polar residues. Phosphotyrosine; by ABL1 is present on Tyr-421. Phosphoserine occurs at positions 432 and 470. 6 disordered regions span residues 463–482 (LSGL…RKGG), 588–607 (YDSK…SSRR), 697–739 (SLDF…EMDG), 783–803 (VSND…PKHR), 822–841 (RKHE…SRGD), and 862–972 (PLQQ…SPRH). Phosphothreonine is present on Thr-475. Polar residues-rich tracts occupy residues 595–606 (TMSLQEYGTSSR) and 704–722 (LSKS…SARS). Ser-969 carries the post-translational modification Phosphoserine. 2 SH3 domains span residues 1049 to 1108 (LEMR…LLPP) and 1123 to 1184 (LEYG…VLKR). A Phosphothreonine modification is found at Thr-1189. Phosphotyrosine occurs at positions 1193 and 1198. Residues 1198 to 1210 (YSSSPSRSATVSP) show a composition bias toward low complexity. The tract at residues 1198 to 1227 (YSSSPSRSATVSPQQPQAQQRRVTPDRSQP) is disordered. Phosphoserine is present on residues Ser-1201 and Ser-1209. Positions 1211–1227 (QQPQAQQRRVTPDRSQP) are enriched in polar residues. Residues 1229–1290 (LDLCSYQALY…PGNYVKPLYL (62 aa)) form the SH3 3 domain. Tyr-1238 is subject to Phosphotyrosine; by ABL1.

In terms of assembly, interacts (via SH3 domain 2) with PXN. Interacts with the long isoform of AFDN and with VCL. AFDN and VCL bind to SORBS1 in a competitive manner and do not form a ternary complex. Interacts with ABL1, CBL, CBLB and INPPL1/SHIP2 through the third SH3 domain. Interaction with ABL1 occurs only after insulin stimulation while this has no effect on the interaction with INPPL1. Interacts with the insulin receptor but dissociates from it following insulin stimulation. Also interacts with SCA7, PTK2/FAK1 and flotillin. Interacts (via third SH3 domain) with the Ten-1 ICD form of TENM1; the interaction induces the translocation of SORBS1 to the nucleus. Interacts with INSM1. In terms of processing, O-glycosylated. Expressed in all tissues tested: heart, brain, spleen, lung, liver, muscle, kidney and testis. Expressed in 3T3-L1 adipocytes but not in 3T3-L1 fibroblasts.

The protein resides in the cell junction. Its subcellular location is the adherens junction. It localises to the cell membrane. The protein localises to the cytoplasm. It is found in the cytoskeleton. The protein resides in the focal adhesion. Its subcellular location is the nucleus. It localises to the nucleus matrix. Its function is as follows. Plays a role in tyrosine phosphorylation of CBL by linking CBL to the insulin receptor. Required for insulin-stimulated glucose transport. Involved in formation of actin stress fibers and focal adhesions. This chain is Sorbin and SH3 domain-containing protein 1, found in Mus musculus (Mouse).